The chain runs to 439 residues: Cytochrome b-c1 complex reductase subunit, mitochondrial (439 aa).

The transit peptide at 1–17 (MIRGSSALKSLTSRRLY) directs the protein to the mitochondrion.

It belongs to the peptidase M16 family. UQCRC1/QCR1 subfamily. Component of the ubiquinol-cytochrome c oxidoreductase (cytochrome b-c1 complex, complex III, CIII), a multisubunit enzyme composed of 10 subunits. The complex is composed of 3 respiratory subunits cytochrome b (COB), cytochrome c1 (CYT1) and Rieske protein (RIP1), 2 core protein subunits COR1 and QCR2, and 5 low-molecular weight protein subunits QCR6, QCR7, QCR8, QCR9 and QCR10. The complex exists as an obligatory dimer and forms supercomplexes (SCs) in the inner mitochondrial membrane with a monomer or a dimer of cytochrome c oxidase (complex IV, CIV), resulting in 2 different assemblies (supercomplexes III(2)IV and III(2)IV(2)).

The protein localises to the mitochondrion inner membrane. Component of the ubiquinol-cytochrome c oxidoreductase, a multisubunit transmembrane complex that is part of the mitochondrial electron transport chain which drives oxidative phosphorylation. The complex plays an important role in the uptake of multiple carbon sources present in different host niches. In Candida albicans (strain SC5314 / ATCC MYA-2876) (Yeast), this protein is Cytochrome b-c1 complex reductase subunit, mitochondrial.